The chain runs to 127 residues: Small ribosomal subunit protein uS13 (127 aa).

Residues 93–127 (RQGLPVRGQRTRTNGRTRRGRRVTVAGKKKAPAKK) form a disordered region. Positions 101–127 (QRTRTNGRTRRGRRVTVAGKKKAPAKK) are enriched in basic residues.

The protein belongs to the universal ribosomal protein uS13 family. Part of the 30S ribosomal subunit. Forms a loose heterodimer with protein S19. Forms two bridges to the 50S subunit in the 70S ribosome.

In terms of biological role, located at the top of the head of the 30S subunit, it contacts several helices of the 16S rRNA. In the 70S ribosome it contacts the 23S rRNA (bridge B1a) and protein L5 of the 50S subunit (bridge B1b), connecting the 2 subunits; these bridges are implicated in subunit movement. Contacts the tRNAs in the A and P-sites. This Crocosphaera subtropica (strain ATCC 51142 / BH68) (Cyanothece sp. (strain ATCC 51142)) protein is Small ribosomal subunit protein uS13.